Reading from the N-terminus, the 363-residue chain is Membrane-bound lytic murein transglycosylase C (363 aa).

The signal sequence occupies residues 1–15 (MKKYIVFAIIPFLFA). Residue Cys16 is the site of N-palmitoyl cysteine attachment. Residue Cys16 is the site of S-diacylglycerol cysteine attachment.

Belongs to the transglycosylase Slt family.

The protein resides in the cell outer membrane. The enzyme catalyses Exolytic cleavage of the (1-&gt;4)-beta-glycosidic linkage between N-acetylmuramic acid (MurNAc) and N-acetylglucosamine (GlcNAc) residues in peptidoglycan, from either the reducing or the non-reducing ends of the peptidoglycan chains, with concomitant formation of a 1,6-anhydrobond in the MurNAc residue.. In terms of biological role, murein-degrading enzyme. May play a role in recycling of muropeptides during cell elongation and/or cell division. In Histophilus somni (strain 129Pt) (Haemophilus somnus), this protein is Membrane-bound lytic murein transglycosylase C.